Here is a 34-residue protein sequence, read N- to C-terminus: Thermomycolin (34 aa).

The active-site Charge relay system is Ser-33.

It belongs to the peptidase S8 family.

The protein resides in the secreted. The catalysed reaction is Rather non-specific hydrolysis of proteins. Preferential cleavage: -Ala-|-Xaa-, -Tyr-|-Xaa-, -Phe-|-Xaa- in small molecular substrates.. In terms of biological role, this is an extracellular proteinase with a general specificity for apolar residues. The polypeptide is Thermomycolin (Malbranchea cinnamomea (Thermophilic fungus)).